The chain runs to 274 residues: MQAILSSWFIQGMIKATSDMWHKGWDERNGGNISLRLLAEEVEPYRRDFYQHPRKVELTQPAPELANSWFLVTGSGKFFRNVELNPAENLVLLQVSNDGMAYHIHWGLTQGGLPTSELAAHFQSHIVRMQVSGGTNRVIMHCHATNLIALSYVQKLENASFTRLLWEGSTECLVVFPDGIGIVPWMVPGTDGIGTQTAEQMREHSLVLWPFHGIFGSGPTLDDAFGLIDTAEKSAEIMVKVLSMGGKKQTISREQLIALAARFDVTPMAAALDA.

The active site involves glutamate 117. The Zn(2+) site is built by histidine 141, histidine 143, and histidine 212.

This sequence belongs to the aldolase class II family. RhaD subfamily. Homotetramer. The cofactor is Zn(2+).

It localises to the cytoplasm. The enzyme catalyses L-rhamnulose 1-phosphate = (S)-lactaldehyde + dihydroxyacetone phosphate. It participates in carbohydrate degradation; L-rhamnose degradation; glycerone phosphate from L-rhamnose: step 3/3. Its function is as follows. Catalyzes the reversible cleavage of L-rhamnulose-1-phosphate to dihydroxyacetone phosphate (DHAP) and L-lactaldehyde. The sequence is that of Rhamnulose-1-phosphate aldolase from Yersinia pseudotuberculosis serotype IB (strain PB1/+).